The following is a 142-amino-acid chain: Hemoglobin subunit alpha-1 (142 aa).

The Globin domain maps to 2–142 (KLSADDKHNV…VGYVLASKYR (141 aa)). His59 is an O2 binding site. Heme b is bound at residue His88.

This sequence belongs to the globin family. Major hemoglobin is a heterotetramer of two alpha-1 chains and two beta-1 chains. As to expression, red blood cells.

Involved in oxygen transport from the lung to the various peripheral tissues. This is Hemoglobin subunit alpha-1 from Triturus cristatus (Great crested newt).